A 234-amino-acid polypeptide reads, in one-letter code: Urease accessory protein UreF (234 aa).

This sequence belongs to the UreF family. As to quaternary structure, ureD, UreF and UreG form a complex that acts as a GTP-hydrolysis-dependent molecular chaperone, activating the urease apoprotein by helping to assemble the nickel containing metallocenter of UreC. The UreE protein probably delivers the nickel.

It localises to the cytoplasm. Required for maturation of urease via the functional incorporation of the urease nickel metallocenter. In Azoarcus sp. (strain BH72), this protein is Urease accessory protein UreF.